The following is a 313-amino-acid chain: tRNA dimethylallyltransferase (313 aa).

11 to 18 (GPTAAGKS) contacts ATP. Substrate is bound at residue 13–18 (TAAGKS). Interaction with substrate tRNA regions lie at residues 36–39 (DSAT), 160–164 (QRIQR), and 244–249 (RCVGYR).

The protein belongs to the IPP transferase family. In terms of assembly, monomer. Requires Mg(2+) as cofactor.

The catalysed reaction is adenosine(37) in tRNA + dimethylallyl diphosphate = N(6)-dimethylallyladenosine(37) in tRNA + diphosphate. Catalyzes the transfer of a dimethylallyl group onto the adenine at position 37 in tRNAs that read codons beginning with uridine, leading to the formation of N6-(dimethylallyl)adenosine (i(6)A). In Bordetella pertussis (strain Tohama I / ATCC BAA-589 / NCTC 13251), this protein is tRNA dimethylallyltransferase.